A 65-amino-acid polypeptide reads, in one-letter code: Large ribosomal subunit protein bL35 (65 aa).

The segment at 1–65 is disordered; sequence MPKIKTNRAA…GRLDRMLPYL (65 aa). Positions 10 to 44 are enriched in basic residues; the sequence is AAKRFRKTASGKYKAGHANRSHILTKKATKRKRNL. Residues 50-65 show a composition bias toward basic and acidic residues; sequence VRAEDAGRLDRMLPYL.

This sequence belongs to the bacterial ribosomal protein bL35 family.

This is Large ribosomal subunit protein bL35 from Xylella fastidiosa (strain M23).